The following is a 608-amino-acid chain: 2',5'-phosphodiesterase 12 (608 aa).

The transit peptide at 1-16 (MWRLPGRAALRGVRSV) directs the protein to the mitochondrion. Positions 91–111 (AKKSRKNRAHSSGGAACAATG) are disordered. The span at 100-111 (HSSGGAACAATG) shows a compositional bias: low complexity. A Phosphoserine modification is found at Ser216. Residues Glu350, Asp495, and Asn497 each coordinate Mg(2+). Asp495 serves as the catalytic Proton donor/acceptor.

This sequence belongs to the CCR4/nocturin family. It depends on Mg(2+) as a cofactor.

The protein localises to the mitochondrion matrix. The enzyme catalyses Exonucleolytic cleavage of poly(A) to 5'-AMP.. In terms of biological role, enzyme that cleaves 2',5'-phosphodiester bond linking adenosines of the 5'-triphosphorylated oligoadenylates, triphosphorylated oligoadenylates referred as 2-5A modulates the 2-5A system. Degrades triphosphorylated 2-5A to produce AMP and ATP. Also cleaves 3',5'-phosphodiester bond of oligoadenylates. Plays a role as a negative regulator of the 2-5A system that is one of the major pathways for antiviral and antitumor functions induced by interferons (IFNs). Suppression of this enzyme increases cellular 2-5A levels and decreases viral replication in cultured small-airway epithelial cells. The polypeptide is 2',5'-phosphodiesterase 12 (Pde12) (Rattus norvegicus (Rat)).